Consider the following 445-residue polypeptide: FAS-associated factor 2 (445 aa).

Ala-2 bears the N-acetylalanine mark. Residues 12 to 48 (EQTEKLLQFQDLTGIESMDQCRHTLEQHNWNIEAAVQ) form the UBA domain. At Lys-167 the chain carries N6-acetyllysine. Residues 275–350 (SERLEREERN…EEKERKLECL (76 aa)) adopt a coiled-coil conformation. The segment at 299-361 (ASLRADQEKE…PEPSPDDPES (63 aa)) is disordered. The segment covering 303-348 (ADQEKERKKREERERKRRKEEEVQQQKLAEERRRRNLQEEKERKLE) has biased composition (basic and acidic residues). In terms of domain architecture, UBX spans 357-439 (DDPESVKIIF…GLSHTEVLFV (83 aa)).

In terms of assembly, identified in a complex that contains SEL1L, OS9, FAF2/UBXD8, UBE2J1/UBC6E and AUP1. Interacts with YOD1. Interacts (via N-terminus) with UBQLN2 (via C-terminus). Interacts with PNPLA2 and UBAC2. Interacts with ZFAND2B; probably through VCP. Interacts with LMBR1L.

Its subcellular location is the cytoplasm. The protein localises to the lipid droplet. The protein resides in the endoplasmic reticulum. Its function is as follows. Plays an important role in endoplasmic reticulum-associated degradation (ERAD) that mediates ubiquitin-dependent degradation of misfolded endoplasmic reticulum proteins. By controlling the steady-state expression of the IGF1R receptor, indirectly regulates the insulin-like growth factor receptor signaling pathway. Involved in inhibition of lipid droplet degradation by binding to phospholipase PNPL2 and inhibiting its activity by promoting dissociation of PNPL2 from its endogenous activator, ABHD5 which inhibits the rate of triacylglycerol hydrolysis. Involved in stress granule disassembly: associates with ubiquitinated G3BP1 in response to heat shock, thereby promoting interaction between ubiquitinated G3BP1 and VCP, followed by G3BP1 extraction from stress granules and stress granule disassembly. This is FAS-associated factor 2 (FAF2) from Bos taurus (Bovine).